A 1098-amino-acid polypeptide reads, in one-letter code: Platelet-derived growth factor receptor beta (1098 aa).

A signal peptide spans 1–31 (MGLPGVIPALVLRGQLLLSVLWLLGPQTSRG). Residues 32–531 (LVITPPGPEF…VVPHSLPFKV (500 aa)) are Extracellular-facing. Ig-like C2-type domains are found at residues 33–119 (VITP…YIFV), 128–209 (PMDS…YSLQ), 213–308 (INVS…INIS), 330–402 (HRSR…HEDD), and 415–523 (PVRV…VTVV). Residues Asn-44, Asn-88, and Asn-102 are each glycosylated (N-linked (GlcNAc...) asparagine). Cys-53 and Cys-99 are disulfide-bonded. The cysteines at positions 148 and 189 are disulfide-linked. A glycan (N-linked (GlcNAc...) asparagine) is linked at Asn-214. A disulfide bridge connects residues Cys-234 and Cys-290. Asn-291, Asn-306, Asn-353, Asn-370, Asn-444, Asn-467, and Asn-478 each carry an N-linked (GlcNAc...) asparagine glycan. The cysteines at positions 435 and 507 are disulfide-linked. Residues 532 to 552 (VVISAILALVVLTVISLIILI) form a helical membrane-spanning segment. Over 553-1098 (MLWQKKPRYE…PLAEAEDSFL (546 aa)) the chain is Cytoplasmic. 3 positions are modified to phosphotyrosine; by autocatalysis: Tyr-561, Tyr-578, and Tyr-580. The region spanning 599–961 (LVLGRTLGSG…QLVLLLERLL (363 aa)) is the Protein kinase domain. ATP is bound by residues 605–613 (LGSGAFGQV) and Lys-633. Tyr-685 carries the post-translational modification Phosphotyrosine; by ABL1 and ABL2. A phosphotyrosine; by autocatalysis mark is found at Tyr-715, Tyr-739, Tyr-750, Tyr-762, Tyr-770, Tyr-774, and Tyr-777. Asp-825 serves as the catalytic Proton acceptor. Tyr-856 is modified (phosphotyrosine; by autocatalysis). Tyr-933 and Tyr-969 each carry phosphotyrosine; by ABL1 and ABL2. 2 positions are modified to phosphotyrosine; by autocatalysis: Tyr-1008 and Tyr-1020. The interval 1016–1098 (SDNDYIIPLP…PLAEAEDSFL (83 aa)) is disordered. The segment covering 1042-1059 (SLASSTLNEVNTSSTISC) has biased composition (polar residues). A compositionally biased stretch (low complexity) spans 1062–1082 (PLELQEEPQQAEPEAQLEQPQ).

This sequence belongs to the protein kinase superfamily. Tyr protein kinase family. CSF-1/PDGF receptor subfamily. In terms of assembly, interacts with homodimeric PDGFB and PDGFD, and with heterodimers formed by PDGFA and PDGFB. May also interact with homodimeric PDGFC. Monomer in the absence of bound ligand. Interaction with homodimeric PDGFB, heterodimers formed by PDGFA and PDGFB or homodimeric PDGFD, leads to receptor dimerization, where both PDGFRA homodimers and heterodimers with PDGFRB are observed. Interacts with SH2B2/APS. Interacts directly (tyrosine phosphorylated) with SHB. Interacts (tyrosine phosphorylated) with PIK3R1 and RASA1. Interacts (tyrosine phosphorylated) with CBL. Interacts (tyrosine phosphorylated) with SRC and SRC family kinases. Interacts (tyrosine phosphorylated) with PIK3C2B, maybe indirectly. Interacts (tyrosine phosphorylated) with SHC1, GRB7, GRB10 and NCK1. Interaction with GRB2 is mediated by SHC1. Interacts (via C-terminus) with NHERF1. In terms of processing, autophosphorylated on tyrosine residues upon ligand binding. Autophosphorylation occurs in trans, i.e. one subunit of the dimeric receptor phosphorylates tyrosine residues on the other subunit. Phosphorylation at Tyr-578, and to a lesser degree, Tyr-580 is important for interaction with SRC. Phosphorylation at Tyr-715 is important for interaction with GRB2. Phosphorylation at Tyr-739 and Tyr-750 is important for interaction with PIK3R1. Phosphorylation at Tyr-750 is important for interaction with NCK1. Phosphorylation at Tyr-770 and Tyr-856 is important for interaction with RASA1/GAP. Phosphorylation at Tyr-856 is important for efficient phosphorylation of PLCG1 and PTPN11, resulting in increased phosphorylation of AKT1, MAPK1/ERK2 and/or MAPK3/ERK1, PDCD6IP/ALIX and STAM, and in increased cell proliferation. Phosphorylation at Tyr-1008 is important for interaction with PTPN11. Phosphorylation at Tyr-1008 and Tyr-1020 is important for interaction with PLCG1. Dephosphorylated by PTPRJ at Tyr-750, Tyr-856, Tyr-1008 and Tyr-1020. Dephosphorylated by PTPN2 at Tyr-578 and Tyr-1020. N-glycosylated. Post-translationally, ubiquitinated. After autophosphorylation, the receptor is polyubiquitinated, leading to its degradation. In terms of tissue distribution, weakly expressed in glomerular mesangial cells and interstitial cells. Up-regulated in areas of renal fibrosis. In mice with unilateral ureteral obstruction, increased expression in interstitial cells at day 4 and expression is markedly elevated at day 7 and is maximal at day 14.

It is found in the cell membrane. The protein resides in the cytoplasmic vesicle. It localises to the lysosome lumen. It catalyses the reaction L-tyrosyl-[protein] + ATP = O-phospho-L-tyrosyl-[protein] + ADP + H(+). With respect to regulation, present in an inactive conformation in the absence of bound ligand. Binding of PDGFB and/or PDGFD leads to dimerization and activation by autophosphorylation on tyrosine residues. In terms of biological role, tyrosine-protein kinase that acts as a cell-surface receptor for homodimeric PDGFB and PDGFD and for heterodimers formed by PDGFA and PDGFB, and plays an essential role in the regulation of embryonic development, cell proliferation, survival, differentiation, chemotaxis and migration. Plays an essential role in blood vessel development by promoting proliferation, migration and recruitment of pericytes and smooth muscle cells to endothelial cells. Plays a role in the migration of vascular smooth muscle cells and the formation of neointima at vascular injury sites. Required for normal development of the cardiovascular system. Required for normal recruitment of pericytes (mesangial cells) in the kidney glomerulus, and for normal formation of a branched network of capillaries in kidney glomeruli. Promotes rearrangement of the actin cytoskeleton and the formation of membrane ruffles. Binding of its cognate ligands - homodimeric PDGFB, heterodimers formed by PDGFA and PDGFB or homodimeric PDGFD -leads to the activation of several signaling cascades; the response depends on the nature of the bound ligand and is modulated by the formation of heterodimers between PDGFRA and PDGFRB. Phosphorylates PLCG1, PIK3R1, PTPN11, RASA1/GAP, CBL, SHC1 and NCK1. Activation of PLCG1 leads to the production of the cellular signaling molecules diacylglycerol and inositol 1,4,5-trisphosphate, mobilization of cytosolic Ca(2+) and the activation of protein kinase C. Phosphorylation of PIK3R1, the regulatory subunit of phosphatidylinositol 3-kinase, leads to the activation of the AKT1 signaling pathway. Phosphorylation of SHC1, or of the C-terminus of PTPN11, creates a binding site for GRB2, resulting in the activation of HRAS, RAF1 and down-stream MAP kinases, including MAPK1/ERK2 and/or MAPK3/ERK1. Promotes phosphorylation and activation of SRC family kinases. Promotes phosphorylation of PDCD6IP/ALIX and STAM. Receptor signaling is down-regulated by protein phosphatases that dephosphorylate the receptor and its down-stream effectors, and by rapid internalization of the activated receptor. The chain is Platelet-derived growth factor receptor beta (Pdgfrb) from Mus musculus (Mouse).